The chain runs to 556 residues: uncharacterized protein (556 aa).

The segment at 69–129 (RRGHTSGHAS…SSARSSSTSG (61 aa)) is disordered. Composition is skewed to low complexity over residues 74–85 (SGHASEHTSSSR) and 93–129 (SMSSSSESDSDSVSSESNPKSYSDSSTSSARSSSTSG). Residues 379–399 (LGLYIFIGVLLGLIGVIGLFI) form a helical membrane-spanning segment. Residues 498 to 541 (CTICLCEYSEESPLYRELPCHHIFHPACIDPYLLKNSDLCPLCK) form an RING-type; atypical zinc finger.

The protein resides in the vacuole membrane. Its subcellular location is the cell membrane. This is an uncharacterized protein from Schizosaccharomyces pombe (strain 972 / ATCC 24843) (Fission yeast).